We begin with the raw amino-acid sequence, 1368 residues long: DNA-directed RNA polymerase subunit beta (1368 aa).

The protein belongs to the RNA polymerase beta chain family. The RNAP catalytic core consists of 2 alpha, 1 beta, 1 beta' and 1 omega subunit. When a sigma factor is associated with the core the holoenzyme is formed, which can initiate transcription.

The enzyme catalyses RNA(n) + a ribonucleoside 5'-triphosphate = RNA(n+1) + diphosphate. DNA-dependent RNA polymerase catalyzes the transcription of DNA into RNA using the four ribonucleoside triphosphates as substrates. The chain is DNA-directed RNA polymerase subunit beta from Burkholderia cenocepacia (strain HI2424).